The sequence spans 228 residues: Elongation factor 1-beta 1 (228 aa).

The residue at position 2 (A2) is an N-acetylalanine. Residues 14 to 65 (LKTLEEHLAGKTYISGDQLSVDDVKVYAAVLENPGDGFPNASKWYDSVASHL) form the GST C-terminal domain. The interval 75 to 139 (GVRVGGGVAP…DTKKTKESGK (65 aa)) is disordered. Residues 95-115 (PAADGDGDDDDDIDLFADETE) are compositionally biased toward acidic residues. A compositionally biased stretch (basic and acidic residues) spans 116–138 (DEKKAAEEREAAKKDTKKTKESG).

This sequence belongs to the EF-1-beta/EF-1-delta family. As to quaternary structure, EF-1 is composed of 4 subunits: alpha, beta (1B-alpha=beta'), delta (1B-beta), and gamma (1B-gamma).

The protein resides in the cell membrane. EF-1-beta and EF-1-delta stimulate the exchange of GDP bound to EF-1-alpha to GTP. This is Elongation factor 1-beta 1 from Arabidopsis thaliana (Mouse-ear cress).